The primary structure comprises 1106 residues: Communication mutant protein F (1106 aa).

An N-terminal signal peptide occupies residues Met-1–Ala-28. Residues Thr-254–Ser-380 form the G8 domain. N-linked (GlcNAc...) asparagine glycosylation is found at Asn-267, Asn-306, Asn-512, Asn-536, Asn-677, Asn-715, and Asn-833.

It belongs to the comF family.

It localises to the secreted. This is Communication mutant protein F (comF-1) from Dictyostelium discoideum (Social amoeba).